The following is a 613-amino-acid chain: Protein translocase subunit SecD (613 aa).

Helical transmembrane passes span 10-30 (ALVV…WFYF), 452-472 (KGTL…VVYY), 477-497 (LVAD…MSMI), 503-523 (LPGI…NVLI), 548-568 (VFWT…VLFQ), and 576-596 (GFAV…IVVT).

The protein belongs to the SecD/SecF family. SecD subfamily. As to quaternary structure, forms a complex with SecF. Part of the essential Sec protein translocation apparatus which comprises SecA, SecYEG and auxiliary proteins SecDF-YajC and YidC.

Its subcellular location is the cell inner membrane. Part of the Sec protein translocase complex. Interacts with the SecYEG preprotein conducting channel. SecDF uses the proton motive force (PMF) to complete protein translocation after the ATP-dependent function of SecA. The chain is Protein translocase subunit SecD from Anaeromyxobacter dehalogenans (strain 2CP-C).